The sequence spans 422 residues: AP-1 complex subunit mu-1-I (422 aa).

The MHD domain maps to 167 to 420 (KNEVFLDVIE…ITQNGEYEMR (254 aa)).

This sequence belongs to the adaptor complexes medium subunit family. Adaptor protein complex 1 (AP-1) is a heterotetramer composed of two large adaptins (gamma- and beta'-type subunits), a medium adaptin (mu-type subunit AP47) and a small adaptin (sigma-type subunit AP19). Interacts (via N-terminus) with kvs-4. Expressed in the cholinergic motor neuron DA9.

It is found in the golgi apparatus. Its subcellular location is the cytoplasmic vesicle. It localises to the clathrin-coated vesicle membrane. The protein localises to the cell projection. The protein resides in the dendrite. In terms of biological role, component of the adaptor complexes which link clathrin to receptors in coated vesicles. Clathrin-associated protein complexes are believed to interact with the cytoplasmic tails of membrane proteins, leading to their selection and concentration. Required for many aspects of development and behavior, including negative regulation of vulval differentiation. Required for the dendritic localization of potassium channel kvs-4 in the cholinergic motor neuron DA9. This Caenorhabditis elegans protein is AP-1 complex subunit mu-1-I (unc-101).